We begin with the raw amino-acid sequence, 1034 residues long: DNA polymerase I B, chloroplastic/mitochondrial (1034 aa).

The transit peptide at 1-55 directs the protein to the chloroplast and mitochondrion; sequence MGVSLRHLSPSSFWVSRRPRVSSSILSFLVPRRRILCTRKVAIIKGNAGYSTATD. A 3'-5' exonuclease domain is found at 270 to 468; that stretch reads ACDTEVSRID…LYESMKKQLQ (199 aa). Residues 700-1030 are polymerase; it reads HAIAALCEVC…SVDAKCAQNW (331 aa).

The protein belongs to the DNA polymerase type-A family. In terms of tissue distribution, expressed in shoot apical meristem.

The protein localises to the mitochondrion. Its subcellular location is the plastid. The protein resides in the chloroplast. The enzyme catalyses DNA(n) + a 2'-deoxyribonucleoside 5'-triphosphate = DNA(n+1) + diphosphate. With respect to regulation, not inhibited by aphidicolin. Functionally, in addition to polymerase activity, this DNA polymerase exhibits 5'-3' exonuclease activity. Required for DNA replication and accumulation in plastids and mitochondria. The sequence is that of DNA polymerase I B, chloroplastic/mitochondrial (POLIB) from Arabidopsis thaliana (Mouse-ear cress).